A 309-amino-acid chain; its full sequence is Protein FdhE (309 aa).

The protein belongs to the FdhE family.

It localises to the cytoplasm. Its function is as follows. Necessary for formate dehydrogenase activity. The sequence is that of Protein FdhE from Salmonella typhimurium (strain LT2 / SGSC1412 / ATCC 700720).